The primary structure comprises 332 residues: Alanine racemase (332 aa).

Lys33 serves as the catalytic Proton acceptor; specific for D-alanine. Lys33 is modified (N6-(pyridoxal phosphate)lysine). Position 115 (Arg115) interacts with substrate. Tyr245 functions as the Proton acceptor; specific for L-alanine in the catalytic mechanism. Residue Met286 participates in substrate binding.

The protein belongs to the alanine racemase family. Pyridoxal 5'-phosphate is required as a cofactor.

The enzyme catalyses L-alanine = D-alanine. It participates in amino-acid biosynthesis; D-alanine biosynthesis; D-alanine from L-alanine: step 1/1. Functionally, catalyzes the interconversion of L-alanine and D-alanine. May also act on other amino acids. This chain is Alanine racemase (alr), found in Nitratiruptor sp. (strain SB155-2).